We begin with the raw amino-acid sequence, 305 residues long: Syntaxin-112 (305 aa).

Position 1 is an N-acetylmethionine (Met-1). Residues 52–119 (QEIETIKTLI…TLIETLEKRN (68 aa)) are a coiled coil. Residues 210–272 (DLKTKERHEA…SGGTNSLYYA (63 aa)) enclose the t-SNARE coiled-coil homology domain.

The protein belongs to the syntaxin family. As to quaternary structure, part of the t-SNARE complex.

Its function is as follows. Vesicle trafficking protein that functions in the secretory pathway. This is Syntaxin-112 (SYP112) from Arabidopsis thaliana (Mouse-ear cress).